The primary structure comprises 414 residues: CCA-adding enzyme (414 aa).

Positions 8 and 11 each coordinate ATP. CTP contacts are provided by G8 and R11. Residues D21 and D23 each coordinate Mg(2+). Residues R91, R137, and R140 each coordinate ATP. 3 residues coordinate CTP: R91, R137, and R140.

Belongs to the tRNA nucleotidyltransferase/poly(A) polymerase family. Bacterial CCA-adding enzyme type 2 subfamily. Mg(2+) serves as cofactor.

It carries out the reaction a tRNA precursor + 2 CTP + ATP = a tRNA with a 3' CCA end + 3 diphosphate. The catalysed reaction is a tRNA with a 3' CCA end + 2 CTP + ATP = a tRNA with a 3' CCACCA end + 3 diphosphate. In terms of biological role, catalyzes the addition and repair of the essential 3'-terminal CCA sequence in tRNAs without using a nucleic acid template. Adds these three nucleotides in the order of C, C, and A to the tRNA nucleotide-73, using CTP and ATP as substrates and producing inorganic pyrophosphate. tRNA 3'-terminal CCA addition is required both for tRNA processing and repair. Also involved in tRNA surveillance by mediating tandem CCA addition to generate a CCACCA at the 3' terminus of unstable tRNAs. While stable tRNAs receive only 3'-terminal CCA, unstable tRNAs are marked with CCACCA and rapidly degraded. This chain is CCA-adding enzyme, found in Buchnera aphidicola subsp. Acyrthosiphon pisum (strain 5A).